The following is a 508-amino-acid chain: Maturase K (508 aa).

It belongs to the intron maturase 2 family. MatK subfamily.

It is found in the plastid. Its subcellular location is the chloroplast. In terms of biological role, usually encoded in the trnK tRNA gene intron. Probably assists in splicing its own and other chloroplast group II introns. The chain is Maturase K from Gordonia lasianthus (Loblolly bay).